The primary structure comprises 242 residues: Small ribosomal subunit protein uS2 (242 aa).

The protein belongs to the universal ribosomal protein uS2 family.

The sequence is that of Small ribosomal subunit protein uS2 from Pseudoalteromonas translucida (strain TAC 125).